The following is a 510-amino-acid chain: 2-isopropylmalate synthase (510 aa).

The Pyruvate carboxyltransferase domain maps to 4 to 266; sequence IQVFDTTLRD…ETNLKLDETK (263 aa). Mn(2+) contacts are provided by aspartate 13, histidine 201, histidine 203, and asparagine 237. The interval 390–510 is regulatory domain; sequence QVETLQLQFV…DTARKDGVVS (121 aa).

The protein belongs to the alpha-IPM synthase/homocitrate synthase family. LeuA type 1 subfamily. As to quaternary structure, homodimer. Requires Mn(2+) as cofactor.

Its subcellular location is the cytoplasm. It catalyses the reaction 3-methyl-2-oxobutanoate + acetyl-CoA + H2O = (2S)-2-isopropylmalate + CoA + H(+). It participates in amino-acid biosynthesis; L-leucine biosynthesis; L-leucine from 3-methyl-2-oxobutanoate: step 1/4. Catalyzes the condensation of the acetyl group of acetyl-CoA with 3-methyl-2-oxobutanoate (2-ketoisovalerate) to form 3-carboxy-3-hydroxy-4-methylpentanoate (2-isopropylmalate). This is 2-isopropylmalate synthase from Staphylococcus carnosus (strain TM300).